The following is a 357-amino-acid chain: Cinnamyl alcohol dehydrogenase 1 (357 aa).

Cys47 contacts Zn(2+). Thr49 lines the NADP(+) pocket. Zn(2+) contacts are provided by His69, Glu70, Cys100, Cys103, Cys106, Cys114, and Cys163. Residues Thr167, Gly188–Gly193, Ser211–Lys216, Thr251, Gly275, and Ser298–Ile300 contribute to the NADP(+) site.

Belongs to the zinc-containing alcohol dehydrogenase family. In terms of assembly, homodimer. Zn(2+) is required as a cofactor. As to expression, expressed in leaves, mainly in peltate glands.

The catalysed reaction is (E)-cinnamyl alcohol + NADP(+) = (E)-cinnamaldehyde + NADPH + H(+). It catalyses the reaction (E)-coniferol + NADP(+) = (E)-coniferaldehyde + NADPH + H(+). The enzyme catalyses (E)-sinapyl alcohol + NADP(+) = (E)-sinapaldehyde + NADPH + H(+). It carries out the reaction (E)-4-coumaroyl alcohol + NADP(+) = (E)-4-coumaraldehyde + NADPH + H(+). The catalysed reaction is (E)-caffeyl alcohol + NADP(+) = (E)-caffeyl aldehyde + NADPH + H(+). It participates in aromatic compound metabolism; phenylpropanoid biosynthesis. 60% inhibition by 5 mM Ca(+), Mg(+) or Cu(+). In terms of biological role, involved in the production of citral, a mixture of geranial and neral with a strong lemony scent. Reversibly oxidizes geraniol to produce geranial at half the efficiency compared with its activity with cinnamyl alcohol. Does not use nerol and neral as substrates. In Ocimum basilicum (Sweet basil), this protein is Cinnamyl alcohol dehydrogenase 1 (CAD1).